The primary structure comprises 147 residues: Allograft inflammatory factor 1 (147 aa).

At Ser-2 the chain carries N-acetylserine. The residue at position 11 (Lys-11) is an N6-acetyllysine. Position 39 is a phosphoserine (Ser-39). The region spanning 45 to 80 is the EF-hand 1 domain; that stretch reads SKLEAFKKKYMEFDLNEDGGIDIMSLKRMMEKLGVP. Residues Asp-58, Asn-60, and Asp-62 each contribute to the Ca(2+) site. The 35-residue stretch at 81–115 folds into the EF-hand 2; degenerate domain; that stretch reads KTHLELKKLIMEVSSGPGETFSYSDFLKMMLGKRS. A disordered region spans residues 128–147; sequence AREQEKPTGLPAKKAISELP.

In terms of processing, phosphorylated on serine residues.

It is found in the cytoplasm. Its subcellular location is the cytoskeleton. The protein localises to the cell projection. The protein resides in the ruffle membrane. It localises to the phagocytic cup. May play a role in macrophage activation and function. This Bos taurus (Bovine) protein is Allograft inflammatory factor 1 (AIF1).